Here is a 173-residue protein sequence, read N- to C-terminus: Bifunctional protein PyrR (173 aa).

Residues 94-106 (VILIDDVLYTGRT) carry the PRPP-binding motif.

Belongs to the purine/pyrimidine phosphoribosyltransferase family. PyrR subfamily. Homodimer and homohexamer; in equilibrium.

It catalyses the reaction UMP + diphosphate = 5-phospho-alpha-D-ribose 1-diphosphate + uracil. In terms of biological role, regulates transcriptional attenuation of the pyrimidine nucleotide (pyr) operon by binding in a uridine-dependent manner to specific sites on pyr mRNA. This disrupts an antiterminator hairpin in the RNA and favors formation of a downstream transcription terminator, leading to a reduced expression of downstream genes. Also displays a weak uracil phosphoribosyltransferase activity which is not physiologically significant. The chain is Bifunctional protein PyrR from Streptococcus gordonii (strain Challis / ATCC 35105 / BCRC 15272 / CH1 / DL1 / V288).